A 312-amino-acid polypeptide reads, in one-letter code: Urease accessory protein UreD (312 aa).

This sequence belongs to the UreD family. In terms of assembly, ureD, UreF and UreG form a complex that acts as a GTP-hydrolysis-dependent molecular chaperone, activating the urease apoprotein by helping to assemble the nickel containing metallocenter of UreC. The UreE protein probably delivers the nickel.

Its subcellular location is the cytoplasm. Required for maturation of urease via the functional incorporation of the urease nickel metallocenter. This chain is Urease accessory protein UreD, found in Marinomonas sp. (strain MWYL1).